The chain runs to 1353 residues: Protein timeless homolog (1353 aa).

Disordered regions lie at residues 798 to 825, 1150 to 1291, and 1306 to 1335; these read VAED…EEEV, KPTR…LEED, and GGSI…DPFT. Positions 802 to 825 are enriched in acidic residues; that stretch reads RAEDPDEEDPAEPYDSEQEEEEEV. 2 stretches are compositionally biased toward basic and acidic residues: residues 1150 to 1160 and 1168 to 1182; these read KPTRQVERHLE and ERSK…KFDD. Composition is skewed to acidic residues over residues 1183–1206 and 1217–1226; these read FLND…EEEE and DSEDEEEHIE. Over residues 1227-1239 the composition is skewed to basic and acidic residues; sequence QEEAQKKLEKVAE. Composition is skewed to acidic residues over residues 1261 to 1273, 1282 to 1291, and 1323 to 1332; these read DSSD…DSAE, AEDDSDLEED, and EEREDDDDED.

The protein belongs to the timeless family. As to quaternary structure, associates with the cohesin complex. Interacts with smc-1, smc-3, scc-1 and scc-3.

It is found in the nucleus. Its function is as follows. Plays an important role in chromosome cohesion during both mitosis and meiosis. In prophase of meiosis, it is involved in the formation of the synaptonemal complex (SC) and specifically, in the diplotene and diakinesis phases of prophase, it stabilizes the association of homologous chromosomes during synapsis and sister chromatid cohesion. It regulates cohesin subunits to promote meiotic chromosome cohesion and localizes non-SMC (structural maintenance of chromosome) cohesin subunits to chromatin prior to or during pre-meiotic S phase. Implicated in influencing either the stability or loading of meiotic-specific cohesin subunit, rec8. Controls cell cycle exit and cell fusion to prevent the premature differentiation into adult cells. Specifically, regulates hypodermal seam cell identity. In Caenorhabditis elegans, this protein is Protein timeless homolog.